Reading from the N-terminus, the 70-residue chain is Palustrin-2ISa (70 aa).

The signal sequence occupies residues 1-22 (MFTLKKSLLLLFFLGTISLSLC). Residues 23–39 (EQERSAEDEGEVIEEEV) constitute a propeptide, removed in mature form. A disulfide bridge connects residues C64 and C70.

Expressed by the skin glands.

It localises to the secreted. In terms of biological role, has antimicrobial activity against Gram-negative bacterium E.coli ATCC 8739 (MIC=100 ug), against Gram positive bacteria S.aureus ATCC 6538 (MIC=25 ug), methicillin-resistant S.aureus ATCC 43300 (MIC=100 ug), B.subtilis ATCC 6633 (MIC=12.5 ug) and against fungus C.albicans ATCC 90028 (MIC=100 ug). This is Palustrin-2ISa from Odorrana ishikawae (Ishikawa's frog).